The following is a 430-amino-acid chain: Glutamate-1-semialdehyde 2,1-aminomutase (430 aa).

Lys265 carries the post-translational modification N6-(pyridoxal phosphate)lysine.

This sequence belongs to the class-III pyridoxal-phosphate-dependent aminotransferase family. HemL subfamily. As to quaternary structure, homodimer. The cofactor is pyridoxal 5'-phosphate.

The protein resides in the cytoplasm. The catalysed reaction is (S)-4-amino-5-oxopentanoate = 5-aminolevulinate. It functions in the pathway porphyrin-containing compound metabolism; protoporphyrin-IX biosynthesis; 5-aminolevulinate from L-glutamyl-tRNA(Glu): step 2/2. The polypeptide is Glutamate-1-semialdehyde 2,1-aminomutase (Shewanella baltica (strain OS195)).